Reading from the N-terminus, the 574-residue chain is Lipase maturation factor 1 (574 aa).

Residues 1 to 39 are disordered; that stretch reads MRPDSLVMAAPEGSLRKRKVGGAEHSPASQPSLARDPAD. The Cytoplasmic portion of the chain corresponds to 1–49; it reads MRPDSLVMAAPEGSLRKRKVGGAEHSPASQPSLARDPADSPARLHTGTF. A helical membrane pass occupies residues 50 to 72; that stretch reads WLTRIVLLRALAFIYFVAFLVAF. The Lumenal segment spans residues 73 to 127; it reads NQNKALIGDRGLLPCKLYLKNVQEYFQGSTGWAAWTYAPTIMWLLDWSDMNFNLD. The helical transmembrane segment at 128-151 threads the bilayer; sequence LIALLGLGISSFVLVTGCANMILM. Residues 152–207 lie on the Cytoplasmic side of the membrane; that stretch reads TALWALYMSLVNVGQIWYSFGWESQLLETGFLGIFLSPLWTLSRLPKNTPTSQIVL. A helical transmembrane segment spans residues 208–221; sequence WGFRWLIFRIMLGA. The Lumenal portion of the chain corresponds to 222 to 292; the sequence is GLIKVRGDKC…LGRRMRILHG (71 aa). Residues 293–321 form a helical membrane-spanning segment; sequence VLQILFQVILIISGNLSFLNWLTIVPSLA. Topologically, residues 322–367 are cytoplasmic; it reads CFDDAALGFLFPSGPQGLKKQVLEIQREDTQRVQPKPRDRGCLVRQ. A helical transmembrane segment spans residues 368–388; it reads VVNISLGILVAWLSVPVVINL. The Lumenal portion of the chain corresponds to 389-574; the sequence is LSSRQIMNTS…LPEPPSRHTR (186 aa).

The protein belongs to the lipase maturation factor family. Interacts with LPL and SEL1L. Expressed in all tissues synthesizing lipoprotein lipase (Lpl) and hepatic lipase (Lipc), including adipose tissue, skeletal muscle, heart, and liver. Expressed at higher levels in tissues that express little or no lipase activity such as testis and pancreas suggesting additional functions in these tissues.

It localises to the endoplasmic reticulum membrane. In terms of biological role, involved in the maturation of specific proteins in the endoplasmic reticulum. Required for maturation and transport of active lipoprotein lipase (LPL) through the secretory pathway. Each LMF1 molecule chaperones 50 or more molecules of LPL. In Mus musculus (Mouse), this protein is Lipase maturation factor 1 (Lmf1).